The sequence spans 1021 residues: Ephrin type-B receptor 6 (1021 aa).

The signal sequence occupies residues 1-31 (MATEGAAQLGNRVAGMVCSLWVLLLVSSVLA). The Extracellular portion of the chain corresponds to 32–594 (LEEVLLDTTG…LSSQLPERLS (563 aa)). One can recognise an Eph LBD domain in the interval 33-237 (EEVLLDTTGE…FSYTCPAVLR (205 aa)). Residues 163–182 (SFPSSSSSSSSSSSAAWAVG) are disordered. Residues 166–176 (SSSSSSSSSSS) are compositionally biased toward low complexity. 2 Fibronectin type-III domains span residues 369-486 (PPSA…TSHE) and 487-582 (VPSA…TLPQ). The N-linked (GlcNAc...) asparagine glycan is linked to Asn-480. A helical membrane pass occupies residues 595–615 (LVIGSILGALAFLLLAAITVL). Topologically, residues 616–1021 (AVVFQRKRRG…HLRQQGSVEV (406 aa)) are cytoplasmic. The region spanning 670-919 (IKIEEVIGTG…QLVAAFDKMI (250 aa)) is the Protein kinase domain. 676 to 684 (IGTGSFGEV) lines the ATP pocket. One can recognise an SAM domain in the interval 948–1012 (PCLDSPQAWL…LHHIQLLQQH (65 aa)). The PDZ-binding signature appears at 1019–1021 (VEV).

It belongs to the protein kinase superfamily. Tyr protein kinase family. Ephrin receptor subfamily. Interacts with CBL and EPHB1. Interacts with FYN; this interaction takes place in a ligand-independent manner. In terms of processing, ligand-binding increases phosphorylation on tyrosine residues. Phosphorylation on tyrosine residues is mediated by transphosphorylation by the catalytically active EPHB1 in a ligand-independent manner. Tyrosine phosphorylation of the receptor may act as a switch on the functional transition from cell adhesion/attraction to de-adhesion/repulsion. In terms of tissue distribution, expressed in brain. Expressed in non invasive breast carcinoma cell lines (at protein level). Strong expression in brain and pancreas, and weak expression in other tissues, such as heart, placenta, lung, liver, skeletal muscle and kidney. Expressed in breast non invasive tumors but not in metastatic lesions. Isoform 3 is expressed in cell lines of glioblastomas, anaplastic astrocytomas, gliosarcomas and astrocytomas. Isoform 3 is not detected in normal tissues.

The protein resides in the membrane. It is found in the secreted. In terms of biological role, kinase-defective receptor for members of the ephrin-B family. Binds to ephrin-B1 and ephrin-B2. Modulates cell adhesion and migration by exerting both positive and negative effects upon stimulation with ephrin-B2. Inhibits JNK activation, T-cell receptor-induced IL-2 secretion and CD25 expression upon stimulation with ephrin-B2. The protein is Ephrin type-B receptor 6 (EPHB6) of Homo sapiens (Human).